A 476-amino-acid polypeptide reads, in one-letter code: Glycogen synthase (476 aa).

Lys15 is a binding site for ADP-alpha-D-glucose.

It belongs to the glycosyltransferase 1 family. Bacterial/plant glycogen synthase subfamily.

It catalyses the reaction [(1-&gt;4)-alpha-D-glucosyl](n) + ADP-alpha-D-glucose = [(1-&gt;4)-alpha-D-glucosyl](n+1) + ADP + H(+). Its pathway is glycan biosynthesis; glycogen biosynthesis. Functionally, synthesizes alpha-1,4-glucan chains using ADP-glucose. The chain is Glycogen synthase from Yersinia enterocolitica serotype O:8 / biotype 1B (strain NCTC 13174 / 8081).